The chain runs to 418 residues: Caveolae-associated protein 2 (418 aa).

The tract at residues M1 to S42 is disordered. At G2 the chain carries N-acetylglycine. The interval G2–A168 is interaction with CAVIN1. A phosphoserine mark is found at S27, S35, S37, and S51. Coiled-coil stretches lie at residues L61–E87 and R126–R268. Positions L62 to L100 are leucine-zipper. T196 carries the post-translational modification Phosphothreonine. Disordered stretches follow at residues V200 to K238 and I262 to Q382. Residues S203, S204, and S218 each carry the phosphoserine modification. Acidic residues predominate over residues S203 to A219. A compositionally biased stretch (basic and acidic residues) spans E220–K238. Residues L275 to S287 are compositionally biased toward polar residues. Phosphoserine is present on residues S283, S284, S287, S288, S293, and S296. The span at R303–E321 shows a compositional bias: basic and acidic residues. A phosphoserine mark is found at S327, S336, S359, and S363. Residues R355–D366 show a composition bias toward polar residues. T368 carries the post-translational modification Phosphothreonine. Over residues T368–P377 the composition is skewed to acidic residues. Position 388 is a phosphotyrosine (Y388). Phosphoserine is present on residues S390 and S396. The segment at S396–A418 is disordered.

Belongs to the CAVIN family. Component of the CAVIN complex composed of CAVIN1, CAVIN2, CAVIN3 and CAVIN4. Binds to PRKCA in the presence of phosphatidylserine. Interacts with CAVIN4; this augments the transactivation of NPPA by CAVIN4. Interacts with CAVIN1. Interacts with CAV3. The N-terminus is blocked. In terms of tissue distribution, heart, adipose tissue, lung and endothelial cells (at protein level). Highly expressed in kidney and expressed at lower levels in liver, spleen, thymus, stomach, intestine and uterus.

It is found in the cytoplasm. It localises to the cytosol. The protein resides in the membrane. Its subcellular location is the caveola. In terms of biological role, plays an important role in caveolar biogenesis and morphology. Regulates caveolae morphology by inducing membrane curvature within caveolae. Plays a role in caveola formation in a tissue-specific manner. Required for the formation of caveolae in the lung and fat endothelia but not in the heart endothelia. Negatively regulates the size or stability of CAVIN complexes in the lung endothelial cells. May play a role in targeting PRKCA to caveolae. The protein is Caveolae-associated protein 2 (Cavin2) of Mus musculus (Mouse).